A 121-amino-acid polypeptide reads, in one-letter code: Large ribosomal subunit protein bL12 (121 aa).

It belongs to the bacterial ribosomal protein bL12 family. Homodimer. Part of the ribosomal stalk of the 50S ribosomal subunit. Forms a multimeric L10(L12)X complex, where L10 forms an elongated spine to which 2 to 4 L12 dimers bind in a sequential fashion. Binds GTP-bound translation factors.

Its function is as follows. Forms part of the ribosomal stalk which helps the ribosome interact with GTP-bound translation factors. Is thus essential for accurate translation. This Xanthomonas euvesicatoria pv. vesicatoria (strain 85-10) (Xanthomonas campestris pv. vesicatoria) protein is Large ribosomal subunit protein bL12.